The sequence spans 710 residues: Polyribonucleotide nucleotidyltransferase (710 aa).

Positions 486 and 492 each coordinate Mg(2+). Residues 553–612 enclose the KH domain; that stretch reads PRFETIKIHPDKIRDIIGKGGATIRSITEETNSSIDIDDDGTVKVYADDNEALQAALNRI. The 69-residue stretch at 622 to 690 folds into the S1 motif domain; it reads GAIYEGTVVR…QRGRIKLSIK (69 aa).

This sequence belongs to the polyribonucleotide nucleotidyltransferase family. In terms of assembly, component of the RNA degradosome, which is a multiprotein complex involved in RNA processing and mRNA degradation. Mg(2+) serves as cofactor.

Its subcellular location is the cytoplasm. It carries out the reaction RNA(n+1) + phosphate = RNA(n) + a ribonucleoside 5'-diphosphate. Involved in mRNA degradation. Catalyzes the phosphorolysis of single-stranded polyribonucleotides processively in the 3'- to 5'-direction. This Cellvibrio japonicus (strain Ueda107) (Pseudomonas fluorescens subsp. cellulosa) protein is Polyribonucleotide nucleotidyltransferase.